Reading from the N-terminus, the 430-residue chain is Protein IQ-DOMAIN 3 (430 aa).

Positions 1–36 (MGKSWFSAVKKALSPEPKQKKEQKPHKSKKWFGKSK) are disordered. Residues 9 to 16 (VKKALSPE) carry the Nuclear localization signal 1 motif. Residues 23-35 (QKPHKSKKWFGKS) are compositionally biased toward basic residues. Residues 107–135 (EEIAAIKIQTAFRGYMARRALRALRGLVR) enclose the IQ domain. Positions 170-224 (RLRLSEDKQALTRQLQQKHNKDFDKTGENWNDSTLSREKVEANMLNKQVATMRRE) form a coiled coil. The interval 213 to 231 (MLNKQVATMRREKALAYAF) is calmodulin-binding. Disordered stretches follow at residues 271–368 (ENHS…SQSV) and 385–430 (SNLS…TNLA). Over residues 286–295 (ARSVASRAMS) the composition is skewed to low complexity. Polar residues predominate over residues 326 to 340 (SEDSNSIVSFQSEQP). The Nuclear localization signal 2 signature appears at 396-403 (AKKRLSFS).

It belongs to the IQD family. As to quaternary structure, binds to multiple calmodulin (CaM) in the presence of Ca(2+) and CaM-like proteins.

The protein localises to the nucleus. Its subcellular location is the nucleolus. It is found in the cytoplasm. It localises to the cytoskeleton. Functionally, may be involved in cooperative interactions with calmodulins or calmodulin-like proteins. Recruits calmodulin proteins to microtubules, thus being a potential scaffold in cellular signaling and trafficking. May associate with nucleic acids and regulate gene expression at the transcriptional or post-transcriptional level. The chain is Protein IQ-DOMAIN 3 from Arabidopsis thaliana (Mouse-ear cress).